The sequence spans 874 residues: Eukaryotic translation initiation factor 3 subunit C (874 aa).

A disordered region spans residues 1 to 70 (MSRFFVSGYT…DGRPSGPAYF (70 aa)). Over residues 14-61 (SSEEEDLLSTSEEELLSSSDEGEDNESDSSFFGEDDDESEESSSDDED) the composition is skewed to acidic residues. The PCI domain maps to 598-774 (FHQHINLELL…KFISFTSTTE (177 aa)). Positions 797 to 874 (KNEKTQSNGY…SNNDEFQATA (78 aa)) are disordered. The segment covering 813–848 (KDQQNQQQQNQNQNQQQQQNQQQQQQQQSSQQQSNN) has biased composition (low complexity). The segment covering 862 to 874 (NVNSNNDEFQATA) has biased composition (polar residues).

It belongs to the eIF-3 subunit C family. Component of the eukaryotic translation initiation factor 3 (eIF-3) complex.

The protein localises to the cytoplasm. Component of the eukaryotic translation initiation factor 3 (eIF-3) complex, which is involved in protein synthesis of a specialized repertoire of mRNAs and, together with other initiation factors, stimulates binding of mRNA and methionyl-tRNAi to the 40S ribosome. The eIF-3 complex specifically targets and initiates translation of a subset of mRNAs involved in cell proliferation. In Candida albicans (strain SC5314 / ATCC MYA-2876) (Yeast), this protein is Eukaryotic translation initiation factor 3 subunit C.